The primary structure comprises 470 residues: Light-independent protochlorophyllide reductase subunit N (470 aa).

Residues cysteine 24, cysteine 49, and cysteine 109 each contribute to the [4Fe-4S] cluster site.

The protein belongs to the BchN/ChlN family. As to quaternary structure, protochlorophyllide reductase is composed of three subunits; ChlL, ChlN and ChlB. Forms a heterotetramer of two ChlB and two ChlN subunits. Requires [4Fe-4S] cluster as cofactor.

It catalyses the reaction chlorophyllide a + oxidized 2[4Fe-4S]-[ferredoxin] + 2 ADP + 2 phosphate = protochlorophyllide a + reduced 2[4Fe-4S]-[ferredoxin] + 2 ATP + 2 H2O. It participates in porphyrin-containing compound metabolism; chlorophyll biosynthesis (light-independent). Component of the dark-operative protochlorophyllide reductase (DPOR) that uses Mg-ATP and reduced ferredoxin to reduce ring D of protochlorophyllide (Pchlide) to form chlorophyllide a (Chlide). This reaction is light-independent. The NB-protein (ChlN-ChlB) is the catalytic component of the complex. This chain is Light-independent protochlorophyllide reductase subunit N, found in Acaryochloris marina (strain MBIC 11017).